A 469-amino-acid chain; its full sequence is Tubulin gamma chain (469 aa).

142 to 148 (AGGTGSG) contacts GTP.

Belongs to the tubulin family.

It localises to the cytoplasm. The protein localises to the cytoskeleton. Its subcellular location is the microtubule organizing center. It is found in the spindle pole body. Its function is as follows. Tubulin is the major constituent of microtubules. The gamma chain is found at microtubule organizing centers (MTOC) such as the spindle poles or the centrosome, suggesting that it is involved in the minus-end nucleation of microtubule assembly. This Microbotryum violaceum (Anther smut fungus) protein is Tubulin gamma chain (TUB4).